Here is a 220-residue protein sequence, read N- to C-terminus: Sugar transporter SWEET1 (220 aa).

Helical transmembrane passes span 9 to 29, 44 to 64, 70 to 90, 106 to 126, 138 to 158, 167 to 187, and 191 to 211; these read LMTF…IMPL, VAGL…SYAL, TMLF…FNYW, VMIA…NTVD, LSSV…AIVI, IINV…FGLL, and IYIY…LTLI. Residues 12–92 form the MtN3/slv 1 domain; that stretch reads FIQFCATFIT…IYYVFNYWKN (81 aa). The 84-residue stretch at 134–217 folds into the MtN3/slv 2 domain; the sequence is RLGFLSSVVC…LTLIKLYPPQ (84 aa).

It belongs to the SWEET sugar transporter family.

The protein localises to the golgi apparatus membrane. Its subcellular location is the cell membrane. Functionally, mediates both low-affinity uptake and efflux of sugar across the membrane. This Dictyostelium discoideum (Social amoeba) protein is Sugar transporter SWEET1 (slc50a1).